Reading from the N-terminus, the 199-residue chain is Recombination protein RecR (199 aa).

The segment at Cys-58 to Cys-73 adopts a C4-type zinc-finger fold. The Toprim domain occupies Arg-81 to Pro-176.

The protein belongs to the RecR family.

May play a role in DNA repair. It seems to be involved in an RecBC-independent recombinational process of DNA repair. It may act with RecF and RecO. This chain is Recombination protein RecR, found in Acidobacterium capsulatum (strain ATCC 51196 / DSM 11244 / BCRC 80197 / JCM 7670 / NBRC 15755 / NCIMB 13165 / 161).